Reading from the N-terminus, the 1827-residue chain is Phenolphthiocerol/phthiocerol polyketide synthase subunit C (1827 aa).

The Ketosynthase family 3 (KS3) domain occupies 35 to 461 (CEPVAVVGIG…GTNAHVVVEQ (427 aa)). Residues C207, H342, and H383 each act as for beta-ketoacyl synthase activity in the active site. The tract at residues 566 to 876 (VFVYSGQGSQ…LAAVGVAASE (311 aa)) is acyltransferase. S654 (for malonyltransferase activity) is an active-site residue. Positions 910–1037 (HPLLGAHIEM…AKVEQSPREC (128 aa)) are N-terminal hotdog fold. Residues 910-1076 (HPLLGAHIEM…QHHGPAFAAL (167 aa)) form a dehydratase region. In terms of domain architecture, PKS/mFAS DH spans 910-1198 (HPLLGAHIEM…LRRVERRAVP (289 aa)). H942 serves as the catalytic Proton acceptor; for dehydratase activity. The segment at 1050 to 1198 (GTTVSPADFY…LRRVERRAVP (149 aa)) is C-terminal hotdog fold. D1111 serves as the catalytic Proton donor; for dehydratase activity. A beta-ketoacyl reductase region spans residues 1439–1617 (ASYVVTGGLG…VINWGPWSEV (179 aa)). 1440–1485 (SYVVTGGLGGLGLVVARWLVDRGAGRVVLGGRSDPTDEQCNVLAEL) contacts NADP(+). The 80-residue stretch at 1706 to 1785 (RAVTERMCAR…DLTADLMRQL (80 aa)) folds into the Carrier domain. S1745 is subject to O-(pantetheine 4'-phosphoryl)serine.

The cofactor is NADP(+). Pantetheine 4'-phosphate serves as cofactor.

The catalysed reaction is icosanoyl-[(phenol)carboxyphthiodiolenone synthase] + 2 (S)-methylmalonyl-CoA + 3 malonyl-CoA + 5 NADPH + 10 H(+) = C32-carboxyphthiodiolenone-[(phenol)carboxyphthiodiolenone synthase] + 5 CO2 + 5 NADP(+) + 5 CoA + 2 H2O. It carries out the reaction docosanoyl-[(phenol)carboxyphthiodiolenone synthase] + 2 (S)-methylmalonyl-CoA + 3 malonyl-CoA + 5 NADPH + 10 H(+) = C34-carboxyphthiodiolenone-[(phenol)carboxyphthiodiolenone synthase] + 5 CO2 + 5 NADP(+) + 5 CoA + 2 H2O. The enzyme catalyses 17-(4-hydroxyphenyl)heptadecanoyl-[(phenol)carboxyphthiodiolenone synthase] + 2 (S)-methylmalonyl-CoA + 3 malonyl-CoA + 5 NADPH + 10 H(+) = C35-(phenol)carboxyphthiodiolenone-[(phenol)carboxyphthiodiolenone synthase] + 5 CO2 + 5 NADP(+) + 5 CoA + 2 H2O. It catalyses the reaction 19-(4-hydroxyphenyl)nonadecanoyl-[(phenol)carboxyphthiodiolenone synthase] + 2 (S)-methylmalonyl-CoA + 3 malonyl-CoA + 5 NADPH + 10 H(+) = C37-(phenol)carboxyphthiodiolenone-[(phenol)carboxyphthiodiolenone synthase] + 5 CO2 + 5 NADP(+) + 5 CoA + 2 H2O. The protein operates within lipid metabolism; fatty acid biosynthesis. Its function is as follows. Part of the PpsABCDE complex involved in the biosynthesis of the lipid core common to phthiocerols and phenolphthiocerols by successive additions of malonyl-CoA or methylmalonyl-CoA extender units. PpsA can accept as substrate the activated forms of either icosanoyl (C20), docosanoyl (C22) or lignoceroyl (C24) groups from FadD26, or a (4-hydroxyphenyl)-C17 or (4-hydroxyphenyl)-C19 fatty acyl from FadD29. PpsA initiates the biosynthesis and extends its substrate using a malonyl-CoA extender unit. The PpsB and PpsC proteins add the second and third malonyl-CoA extender units. PpsD adds an (R)-methylmalonyl unit and PpsE adds a second (R)-methylmalonyl unit. The incorporation of the methylmalonyl units results in formation of two branched methyl groups in the elongated product. The polypeptide is Phenolphthiocerol/phthiocerol polyketide synthase subunit C (ppsD) (Mycobacterium bovis (strain ATCC BAA-935 / AF2122/97)).